Reading from the N-terminus, the 412-residue chain is Protein BTN1 (412 aa).

The first 29 residues, 1 to 29 (MDRRKLIFGKFWLFGLLNNVLYVVILAAA), serve as a signal peptide directing secretion. The next 9 membrane-spanning stretches (helical) occupy residues 41–61 (LILL…PFFI), 70–90 (IWSL…GRLG), 91–111 (VCIV…ITFL), 131–151 (GAGL…KIPV), 154–174 (SLLL…LQVE), 234–254 (VLVV…YLIN), 281–300 (IYVA…RSSG), 307–329 (GLYL…SWYY), and 334–356 (VWVI…VNSF).

It belongs to the battenin family.

It is found in the vacuole membrane. In terms of biological role, involved in vacuolar transport and vacuole pH homeostasis. Also required for cytokinesis. This chain is Protein BTN1 (BTN1), found in Eremothecium gossypii (strain ATCC 10895 / CBS 109.51 / FGSC 9923 / NRRL Y-1056) (Yeast).